The primary structure comprises 244 residues: Anti-H(O) lectin 1 (244 aa).

Residues Asn113 and Asn117 are each glycosylated (N-linked (GlcNAc...) asparagine). Positions 127 and 129 each coordinate Mn(2+). Asp129, Tyr131, Asn137, and Asp142 together coordinate Ca(2+). Residues Asp142 and His145 each contribute to the Mn(2+) site.

The protein belongs to the leguminous lectin family. In terms of assembly, homotetramer.

Its function is as follows. Di-N-acetylchitobiose-binding anti-H(O) lectin. The chain is Anti-H(O) lectin 1 from Cytisophyllum sessilifolium (Sessile-leaved cytisus).